Reading from the N-terminus, the 278-residue chain is Casein kinase II subunit beta (278 aa).

Disordered regions lie at residues 1–22 and 78–111; these read MSQEFVEDYSRTGSSDDEDSGA and DEEEDEDDVVEEDEVDQEMQSNDGHDEGKRRNKS. The residue at position 2 (S2) is an N-acetylserine. S2 is subject to Phosphoserine. A compositionally biased stretch (acidic residues) spans 78-94; that stretch reads DEEEDEDDVVEEDEVDQ.

Belongs to the casein kinase 2 subunit beta family. Tetramer composed of an alpha subunit, an alpha' subunit, one beta subunit and one beta' subunit. Interacts with FACT subunits POB3 and SPT16. interacts with YTA7. In terms of processing, phosphorylated by alpha subunit.

Regulatory subunit of casein kinase II/CK2. As part of the kinase complex regulates the basal catalytic activity of the alpha subunit a constitutively active serine/threonine-protein kinase that phosphorylates a large number of substrates containing acidic residues C-terminal to the phosphorylated serine or threonine. The polypeptide is Casein kinase II subunit beta (CKB1) (Saccharomyces cerevisiae (strain ATCC 204508 / S288c) (Baker's yeast)).